The chain runs to 384 residues: Centrosomal protein of 44 kDa (384 aa).

The segment at 11-188 (RKLEQRLRTL…TKCYSSALVE (178 aa)) is binds with microtubules and centrioles. Residues 191 to 222 (EEEEPTSDSEGGSHLEHEMESPFETAETTPNS) form a disordered region. The segment covering 201-210 (GGSHLEHEME) has biased composition (basic and acidic residues). 2 coiled-coil regions span residues 221–260 (NSEQ…KGKI) and 353–378 (TEDS…SKLL).

In terms of assembly, binds to centriolar microtubules.

The protein localises to the cytoplasm. It localises to the cytoskeleton. The protein resides in the microtubule organizing center. Its subcellular location is the centrosome. It is found in the centriole. The protein localises to the spindle pole. It localises to the midbody. In terms of biological role, centriole-enriched microtubule-binding protein involved in centriole biogenesis. In collaboration with CEP295 and POC1B, is required for the centriole-to-centrosome conversion by ensuring the formation of bona fide centriole wall. Functions as a linker component that maintains centrosome cohesion. Associates with CROCC and regulates its stability and localization to the centrosome. The protein is Centrosomal protein of 44 kDa (cep44) of Xenopus laevis (African clawed frog).